Reading from the N-terminus, the 276-residue chain is 2-dehydro-3-deoxyphosphooctonate aldolase (276 aa).

This sequence belongs to the KdsA family.

The protein resides in the cytoplasm. It carries out the reaction D-arabinose 5-phosphate + phosphoenolpyruvate + H2O = 3-deoxy-alpha-D-manno-2-octulosonate-8-phosphate + phosphate. It participates in carbohydrate biosynthesis; 3-deoxy-D-manno-octulosonate biosynthesis; 3-deoxy-D-manno-octulosonate from D-ribulose 5-phosphate: step 2/3. It functions in the pathway bacterial outer membrane biogenesis; lipopolysaccharide biosynthesis. The sequence is that of 2-dehydro-3-deoxyphosphooctonate aldolase from Xanthomonas euvesicatoria pv. vesicatoria (strain 85-10) (Xanthomonas campestris pv. vesicatoria).